Consider the following 497-residue polypeptide: Glutamyl-tRNA(Gln) amidotransferase subunit A (497 aa).

Residues K80 and S155 each act as charge relay system in the active site. The active-site Acyl-ester intermediate is the S179.

This sequence belongs to the amidase family. GatA subfamily. Heterotrimer of A, B and C subunits.

The enzyme catalyses L-glutamyl-tRNA(Gln) + L-glutamine + ATP + H2O = L-glutaminyl-tRNA(Gln) + L-glutamate + ADP + phosphate + H(+). Its function is as follows. Allows the formation of correctly charged Gln-tRNA(Gln) through the transamidation of misacylated Glu-tRNA(Gln) in organisms which lack glutaminyl-tRNA synthetase. The reaction takes place in the presence of glutamine and ATP through an activated gamma-phospho-Glu-tRNA(Gln). The sequence is that of Glutamyl-tRNA(Gln) amidotransferase subunit A (gatA) from Streptomyces coelicolor (strain ATCC BAA-471 / A3(2) / M145).